The following is a 407-amino-acid chain: Lysosomal phospholipase A and acyltransferase (407 aa).

Residues 1-29 (MGCLCLYRSTLLTGGLLFLLMLADPAFPA) form the signal peptide. A substrate-binding site is contributed by D41. A disulfide bridge connects residues C60 and C84. N94 carries N-linked (GlcNAc...) asparagine glycosylation. Residue S193 is the Acyl-ester intermediate of the active site. S193 contributes to the Zn(2+) binding site. M194 provides a ligand contact to substrate. N-linked (GlcNAc...) asparagine glycosylation occurs at N284. Residues D355 and H387 each act as charge relay system in the active site. H387 is a binding site for Zn(2+). N-linked (GlcNAc...) asparagine glycosylation is present at N393.

It belongs to the AB hydrolase superfamily. Lipase family. In terms of processing, N-glycosylated. Post-translationally, N-glycosylated. N-glycosylation is important for maturation of the enzyme and normal subcellular location. In terms of tissue distribution, detected in brain (at protein level).

It localises to the lysosome. The protein resides in the secreted. It is found in the membrane. The catalysed reaction is a 1,2-diacyl-sn-glycero-3-phosphocholine + H2O = a 2-acyl-sn-glycero-3-phosphocholine + a fatty acid + H(+). The enzyme catalyses 1-hexadecanoyl-2-(9Z-octadecenoyl)-sn-glycero-3-phosphocholine + H2O = 2-(9Z-octadecenoyl)-sn-glycero-3-phosphocholine + hexadecanoate + H(+). It carries out the reaction 1,2-di-(9Z-octadecenoyl)-sn-glycero-3-phosphocholine + H2O = 2-(9Z-octadecenoyl)-sn-glycero-3-phosphocholine + (9Z)-octadecenoate + H(+). It catalyses the reaction 1-hexadecanoyl-2-glutaroyl-sn-glycero-3-phosphocholine + H2O = 2-glutaroyl-sn-glycero-3-phosphocholine + hexadecanoate + H(+). The catalysed reaction is 1-hexadecanoyl-2-nonadioyl-sn-glycero-3-phosphocholine + H2O = 2-nonadioyl-sn-glycero-3-phosphocholine + hexadecanoate + H(+). The enzyme catalyses 1-hexadecanoyl-2-(5-oxopentanoyl)-sn-glycero-3-phosphocholine + H2O = 2-(5-oxopentanoyl)-sn-glycero-3-phosphocholine + hexadecanoate + H(+). It carries out the reaction 1-hexadecanoyl-2-(9-oxononanoyl)-sn-glycero-3-phosphocholine + H2O = 2-(9-oxononanoyl)-sn-glycero-3-phosphocholine + hexadecanoate + H(+). It catalyses the reaction 1,2-dihexadecanoyl-sn-glycero-3-phosphocholine + H2O = 2-hexadecanoyl-sn-glycero-3-phosphocholine + hexadecanoate + H(+). The catalysed reaction is a 1,2-diacyl-sn-glycero-3-phosphocholine + H2O = a 1-acyl-sn-glycero-3-phosphocholine + a fatty acid + H(+). The enzyme catalyses 1-hexadecanoyl-2-(9Z-octadecenoyl)-sn-glycero-3-phosphocholine + H2O = 1-hexadecanoyl-sn-glycero-3-phosphocholine + (9Z)-octadecenoate + H(+). It carries out the reaction 1,2-di-(9Z-octadecenoyl)-sn-glycero-3-phosphocholine + H2O = 1-(9Z-octadecenoyl)-sn-glycero-3-phosphocholine + (9Z)-octadecenoate + H(+). It catalyses the reaction 1,2-dihexadecanoyl-sn-glycero-3-phosphocholine + H2O = 1-hexadecanoyl-sn-glycero-3-phosphocholine + hexadecanoate + H(+). The catalysed reaction is a 1-acyl-sn-glycero-3-phosphocholine + H2O = sn-glycerol 3-phosphocholine + a fatty acid + H(+). The enzyme catalyses 1-hexadecanoyl-sn-glycero-3-phosphocholine + H2O = sn-glycerol 3-phosphocholine + hexadecanoate + H(+). It carries out the reaction N-(acetyl)-sphing-4-enine + a 1,2-diacyl-sn-glycero-3-phosphoethanolamine = 1-O-acyl-N-(acetyl)-sphing-4-enine + a 2-acyl-sn-glycero-3-phosphoethanolamine. It catalyses the reaction 1-hexadecanoyl-2-(9Z-octadecenoyl)-sn-glycero-3-phosphoethanolamine + N-(acetyl)-sphing-4-enine = 2-(9Z-octadecenoyl)-sn-glycero-3-phosphoethanolamine + 1-hexadecanoyl-N-(acetyl)-sphing-4-enine. The catalysed reaction is 1-hexadecanoyl-2-(9Z,12Z-octadecadienoyl)-sn-glycero-3-phosphoethanolamine + N-(acetyl)-sphing-4-enine = 2-(9Z,12Z)-octadecadienoyl-sn-glycero-3-phosphoethanolamine + 1-hexadecanoyl-N-(acetyl)-sphing-4-enine. The enzyme catalyses 1-hexadecanoyl-2-(5Z,8Z,11Z,14Z-eicosatetraenoyl)-sn-glycero-3-phosphoethanolamine + N-(acetyl)-sphing-4-enine = 2-(5Z,8Z,11Z,14Z)-eicosatetraenoyl-sn-glycero-3-phosphoethanolamine + 1-hexadecanoyl-N-(acetyl)-sphing-4-enine. It carries out the reaction N-(acetyl)-sphing-4-enine + a 1,2-diacyl-sn-glycero-3-phosphoethanolamine = 1-O-acyl-N-(acetyl)-sphing-4-enine + a 1-acyl-sn-glycero-3-phosphoethanolamine. It catalyses the reaction 1-hexadecanoyl-2-(9Z-octadecenoyl)-sn-glycero-3-phosphoethanolamine + N-(acetyl)-sphing-4-enine = 1-(9Z-octadecenoyl)-N-(acetyl)-sphing-4-enine + 1-hexadecanoyl-sn-glycero-3-phosphoethanolamine. The catalysed reaction is 1-hexadecanoyl-2-(9Z,12Z-octadecadienoyl)-sn-glycero-3-phosphoethanolamine + N-(acetyl)-sphing-4-enine = 1-(9Z,12Z-octadecadienoyl)-N-acetylsphing-4-enine + 1-hexadecanoyl-sn-glycero-3-phosphoethanolamine. The enzyme catalyses 1-hexadecanoyl-2-(5Z,8Z,11Z,14Z-eicosatetraenoyl)-sn-glycero-3-phosphoethanolamine + N-(acetyl)-sphing-4-enine = 1-(5Z,8Z,11Z,14Z)-eicosatetraenoyl-N-(acetyl)-sphing-4-enine + 1-hexadecanoyl-sn-glycero-3-phosphoethanolamine. It carries out the reaction N-(acetyl)-sphing-4-enine + a 1,2-diacyl-sn-glycero-3-phosphocholine = 1-O-acyl-N-(acetyl)-sphing-4-enine + a 2-acyl-sn-glycero-3-phosphocholine. It catalyses the reaction 1-hexadecanoyl-2-(9Z-octadecenoyl)-sn-glycero-3-phosphocholine + N-(acetyl)-sphing-4-enine = 1-hexadecanoyl-N-(acetyl)-sphing-4-enine + 2-(9Z-octadecenoyl)-sn-glycero-3-phosphocholine. The catalysed reaction is 1-hexadecanoyl-2-(9Z,12Z-octadecadienoyl)-sn-glycero-3-phosphocholine + N-(acetyl)-sphing-4-enine = 2-(9Z,12Z-octadecadienoyl)-sn-glycero-3-phosphocholine + 1-hexadecanoyl-N-(acetyl)-sphing-4-enine. The enzyme catalyses 1-hexadecanoyl-2-(5Z,8Z,11Z,14Z-eicosatetraenoyl)-sn-glycero-3-phosphocholine + N-(acetyl)-sphing-4-enine = 1-hexadecanoyl-N-(acetyl)-sphing-4-enine + 2-(5Z,8Z,11Z,14Z)-eicosatetraenoyl-sn-glycero-3-phosphocholine. It carries out the reaction 1-hexadecanoyl-2-(4Z,7Z,10Z,13Z,16Z,19Z-docosahexaenoyl)-sn-glycero-3-phosphocholine + N-(acetyl)-sphing-4-enine = 2-(4Z,7Z,10Z,13Z,16Z,19Z-docosahexaenoyl)-sn-glycero-3-phosphocholine + 1-hexadecanoyl-N-(acetyl)-sphing-4-enine. It catalyses the reaction 1-hexadecanoyl-2-nonadioyl-sn-glycero-3-phosphocholine + N-(acetyl)-sphing-4-enine = 2-nonadioyl-sn-glycero-3-phosphocholine + 1-hexadecanoyl-N-(acetyl)-sphing-4-enine. The catalysed reaction is 1-octadecanoyl-2-(9Z-octadecenoyl)-sn-glycero-3-phosphocholine + N-(acetyl)-sphing-4-enine = 1-octadecanoyl-N-(acetyl)-sphing-4-enine + 2-(9Z-octadecenoyl)-sn-glycero-3-phosphocholine. The enzyme catalyses 1-(9Z)-octadecenoyl-2-octadecanoyl-sn-glycero-3-phosphocholine + N-(acetyl)-sphing-4-enine = 2-octadecanoyl-sn-glycero-3-phosphocholine + 1-(9Z-octadecenoyl)-N-(acetyl)-sphing-4-enine. It carries out the reaction 1-octadecanoyl-2-(5Z,8Z,11Z,14Z-eicosatetraenoyl)-sn-glycero-3-phosphocholine + N-(acetyl)-sphing-4-enine = 1-octadecanoyl-N-(acetyl)-sphing-4-enine + 2-(5Z,8Z,11Z,14Z)-eicosatetraenoyl-sn-glycero-3-phosphocholine. It catalyses the reaction 1-(9Z-octadecenoyl)-2-hexadecanoyl-sn-glycero-3-phosphocholine + N-(acetyl)-sphing-4-enine = 1-(9Z-octadecenoyl)-N-(acetyl)-sphing-4-enine + 2-hexadecanoyl-sn-glycero-3-phosphocholine. The catalysed reaction is N-(acetyl)-sphing-4-enine + a 1,2-diacyl-sn-glycero-3-phosphocholine = 1-O-acyl-N-(acetyl)-sphing-4-enine + a 1-acyl-sn-glycero-3-phosphocholine. The enzyme catalyses 1-hexadecanoyl-2-(9Z-octadecenoyl)-sn-glycero-3-phosphocholine + N-(acetyl)-sphing-4-enine = 1-(9Z-octadecenoyl)-N-(acetyl)-sphing-4-enine + 1-hexadecanoyl-sn-glycero-3-phosphocholine. It carries out the reaction 1-hexadecanoyl-2-(9Z,12Z-octadecadienoyl)-sn-glycero-3-phosphocholine + N-(acetyl)-sphing-4-enine = 1-(9Z,12Z-octadecadienoyl)-N-acetylsphing-4-enine + 1-hexadecanoyl-sn-glycero-3-phosphocholine. It catalyses the reaction 1-hexadecanoyl-2-(5Z,8Z,11Z,14Z-eicosatetraenoyl)-sn-glycero-3-phosphocholine + N-(acetyl)-sphing-4-enine = 1-(5Z,8Z,11Z,14Z)-eicosatetraenoyl-N-(acetyl)-sphing-4-enine + 1-hexadecanoyl-sn-glycero-3-phosphocholine. The catalysed reaction is 1-hexadecanoyl-2-(4Z,7Z,10Z,13Z,16Z,19Z-docosahexaenoyl)-sn-glycero-3-phosphocholine + N-(acetyl)-sphing-4-enine = 1-(4Z,7Z,10Z,13Z,16Z,19Z-docosahexaenoyl)-N-(acetyl)-sphing-4-enine + 1-hexadecanoyl-sn-glycero-3-phosphocholine. The enzyme catalyses 1-octadecanoyl-2-(9Z-octadecenoyl)-sn-glycero-3-phosphocholine + N-(acetyl)-sphing-4-enine = 1-(9Z-octadecenoyl)-N-(acetyl)-sphing-4-enine + 1-octadecanoyl-sn-glycero-3-phosphocholine. It carries out the reaction 1-octadecanoyl-2-(9Z,12Z)-octadecadienoyl-sn-glycero-3-phosphocholine + N-(acetyl)-sphing-4-enine = 1-(9Z,12Z-octadecadienoyl)-N-acetylsphing-4-enine + 1-octadecanoyl-sn-glycero-3-phosphocholine. It catalyses the reaction 1-(9Z-octadecenoyl)-2-hexadecanoyl-sn-glycero-3-phosphocholine + N-(acetyl)-sphing-4-enine = 1-hexadecanoyl-N-(acetyl)-sphing-4-enine + 1-(9Z-octadecenoyl)-sn-glycero-3-phosphocholine. The catalysed reaction is 1-(9Z)-octadecenoyl-2-octadecanoyl-sn-glycero-3-phosphocholine + N-(acetyl)-sphing-4-enine = 1-octadecanoyl-N-(acetyl)-sphing-4-enine + 1-(9Z-octadecenoyl)-sn-glycero-3-phosphocholine. The enzyme catalyses 1,2-di-(9Z-octadecenoyl)-sn-glycero-3-phosphocholine + N-(acetyl)-sphing-4-enine = 1-(9Z-octadecenoyl)-N-(acetyl)-sphing-4-enine + 1-(9Z-octadecenoyl)-sn-glycero-3-phosphocholine. It carries out the reaction 1-octadecanoyl-2-(5Z,8Z,11Z,14Z-eicosatetraenoyl)-sn-glycero-3-phosphocholine + N-(acetyl)-sphing-4-enine = 1-(5Z,8Z,11Z,14Z)-eicosatetraenoyl-N-(acetyl)-sphing-4-enine + 1-octadecanoyl-sn-glycero-3-phosphocholine. It catalyses the reaction a 1,2-diacyl-sn-glycero-3-phospho-L-serine + N-(acetyl)-sphing-4-enine = a 2-acyl-sn-glycero-3-phospho-L-serine + 1-O-acyl-N-(acetyl)-sphing-4-enine. The catalysed reaction is 1-octadecanoyl-2-(9Z-octadecenoyl)-sn-glycero-3-phospho-L-serine + N-(acetyl)-sphing-4-enine = 2-(9Z-octadecenoyl)-sn-glycero-3-phospho-L-serine + 1-octadecanoyl-N-(acetyl)-sphing-4-enine. The enzyme catalyses a 1,2-diacyl-sn-glycero-3-phospho-L-serine + N-(acetyl)-sphing-4-enine = 1-O-acyl-N-(acetyl)-sphing-4-enine + a 1-acyl-sn-glycero-3-phospho-L-serine. It carries out the reaction 1-octadecanoyl-2-(9Z-octadecenoyl)-sn-glycero-3-phospho-L-serine + N-(acetyl)-sphing-4-enine = 1-octadecanoyl-sn-glycero-3-phosphoserine + 1-(9Z-octadecenoyl)-N-(acetyl)-sphing-4-enine. It catalyses the reaction a 1,2-diacyl-sn-glycero-3-phospho-(1'-sn-glycerol) + N-(acetyl)-sphing-4-enine = 2-acyl-sn-glycero-3-phospho-(1'-sn-glycerol) + 1-O-acyl-N-(acetyl)-sphing-4-enine. The catalysed reaction is 1-octadecanoyl-2-(9Z-octadecenoyl)-sn-glycero-3-phospho-(1'-sn-glycerol) + N-(acetyl)-sphing-4-enine = 2-(9Z-octadecenoyl)-sn-glycero-3-phospho-(1'-sn-glycerol) + 1-octadecanoyl-N-(acetyl)-sphing-4-enine. The enzyme catalyses a 1,2-diacyl-sn-glycero-3-phospho-(1'-sn-glycerol) + N-(acetyl)-sphing-4-enine = 1-O-acyl-N-(acetyl)-sphing-4-enine + 1-acyl-sn-glycero-3-phospho-(1'-sn-glycerol). It carries out the reaction 1-octadecanoyl-2-(9Z-octadecenoyl)-sn-glycero-3-phospho-(1'-sn-glycerol) + N-(acetyl)-sphing-4-enine = 1-octadecanoyl-sn-glycero-3-phospho-(1'-sn-glycerol) + 1-(9Z-octadecenoyl)-N-(acetyl)-sphing-4-enine. It catalyses the reaction an N-acylethanolamine + a 1,2-diacyl-sn-glycero-3-phosphocholine = 2-(acylamino)ethyl fatty acid + a 2-acyl-sn-glycero-3-phosphocholine. The catalysed reaction is an N-acylethanolamine + a 1,2-diacyl-sn-glycero-3-phosphocholine = 2-(acylamino)ethyl fatty acid + a 1-acyl-sn-glycero-3-phosphocholine. The enzyme catalyses N-(5Z,8Z,11Z,14Z-eicosatetraenoyl)-ethanolamine + 1,2-di-(9Z-octadecenoyl)-sn-glycero-3-phosphocholine = 2-[(5Z,8Z,11Z,14Z)-eicosatetraenoylamino]ethyl (9Z)-octadecenoate + (9Z-octadecenoyl)-sn-glycero-3-phosphocholine. It carries out the reaction N-(9Z-octadecenoyl) ethanolamine + 1,2-di-(9Z-octadecenoyl)-sn-glycero-3-phosphocholine = 2-[(9Z)-octadecenoylamino]ethyl (9Z)-octadecenoate + (9Z-octadecenoyl)-sn-glycero-3-phosphocholine. It catalyses the reaction a 3-acyl-sn-glycerol + a 1,2-diacyl-sn-glycero-3-phosphocholine = a 1,3-diacylglycerol + a 1-acyl-sn-glycero-3-phosphocholine. The catalysed reaction is a 3-acyl-sn-glycerol + a 1,2-diacyl-sn-glycero-3-phosphocholine = a 1,3-diacylglycerol + a 2-acyl-sn-glycero-3-phosphocholine. The enzyme catalyses 3-(9Z-octadecenoyl)-sn-glycerol + 1,2-di-(9Z-octadecenoyl)-sn-glycero-3-phosphocholine = 1,3-di-(9Z-octadecenoyl)-glycerol + (9Z-octadecenoyl)-sn-glycero-3-phosphocholine. It carries out the reaction 3-hexadecanoyl-sn-glycerol + 1,2-di-(9Z-octadecenoyl)-sn-glycero-3-phosphocholine = 1-(9Z)-octadecenoyl-3-hexadecanoyl-sn-glycerol + (9Z-octadecenoyl)-sn-glycero-3-phosphocholine. It catalyses the reaction a 1-acyl-sn-glycerol + a 1,2-diacyl-sn-glycero-3-phosphocholine = a 1,3-diacylglycerol + a 2-acyl-sn-glycero-3-phosphocholine. The catalysed reaction is a 1-acyl-sn-glycerol + a 1,2-diacyl-sn-glycero-3-phosphocholine = a 1,3-diacylglycerol + a 1-acyl-sn-glycero-3-phosphocholine. The enzyme catalyses 1-(9Z-octadecenoyl)-sn-glycerol + 1,2-di-(9Z-octadecenoyl)-sn-glycero-3-phosphocholine = 1,3-di-(9Z-octadecenoyl)-glycerol + (9Z-octadecenoyl)-sn-glycero-3-phosphocholine. It carries out the reaction 1-hexadecanoyl-sn-glycerol + 1,2-di-(9Z-octadecenoyl)-sn-glycero-3-phosphocholine = 1-hexadecanoyl-3-(9Z)-octadecenoyl-sn-glycerol + (9Z-octadecenoyl)-sn-glycero-3-phosphocholine. It catalyses the reaction a 2-acylglycerol + a 1,2-diacyl-sn-glycero-3-phosphocholine = a 1,2-diacylglycerol + a 2-acyl-sn-glycero-3-phosphocholine. The catalysed reaction is a 2-acylglycerol + a 1,2-diacyl-sn-glycero-3-phosphocholine = a 1,2-diacylglycerol + a 1-acyl-sn-glycero-3-phosphocholine. The enzyme catalyses 2-hexadecanoylglycerol + 1,2-di-(9Z-octadecenoyl)-sn-glycero-3-phosphocholine = 1-(9Z)-octadecenoyl-2-hexadecanoylglycerol + (9Z-octadecenoyl)-sn-glycero-3-phosphocholine. It carries out the reaction 1-O-alkylglycerol + a 1,2-diacyl-sn-glycero-3-phosphocholine = 1-O-alkyl-3-acylglycerol + a 1-acyl-sn-glycero-3-phosphocholine. It catalyses the reaction 1-O-alkylglycerol + a 1,2-diacyl-sn-glycero-3-phosphocholine = 1-O-alkyl-3-acylglycerol + a 2-acyl-sn-glycero-3-phosphocholine. The catalysed reaction is 1-O-hexadecylglycerol + 1,2-di-(9Z-octadecenoyl)-sn-glycero-3-phosphocholine = 1-O-hexadecyl-3-(9Z)-octadecenoylglycerol + (9Z-octadecenoyl)-sn-glycero-3-phosphocholine. The enzyme catalyses 1-O-alkyl-2-acyl-sn-glycerol + a 1,2-diacyl-sn-glycero-3-phosphocholine = 1-O-alkyl-2,3-diacyl-sn-glycerol + a 2-acyl-sn-glycero-3-phosphocholine. It carries out the reaction 1-O-alkyl-2-acyl-sn-glycerol + a 1,2-diacyl-sn-glycero-3-phosphocholine = 1-O-alkyl-2,3-diacyl-sn-glycerol + a 1-acyl-sn-glycero-3-phosphocholine. It catalyses the reaction 1-O-hexadecyl-2-acetyl-sn-glycerol + 1,2-di-(9Z-octadecenoyl)-sn-glycero-3-phosphocholine = 1-O-hexadecyl-2-acetyl-3-(9Z)-octadecenoyl-sn-glycerol + (9Z-octadecenoyl)-sn-glycero-3-phosphocholine. The catalysed reaction is 1-O-hexadecyl-2-O-methyl-sn-glycerol + 1,2-di-(9Z-octadecenoyl)-sn-glycero-3-phosphocholine = 1-O-hexadecyl-2-O-methyl-3-(9Z)-octadecenoyl-sn-glycerol + (9Z-octadecenoyl)-sn-glycero-3-phosphocholine. The enzyme catalyses a 1,2-diacyl-sn-glycero-3-phosphoethanolamine + H2O = a 1-acyl-sn-glycero-3-phosphoethanolamine + a fatty acid + H(+). It carries out the reaction 1-acyl-2-(5Z,8Z,11Z,14Z)-eicosatetraenoyl-sn-glycero-3-phosphoethanolamine + H2O = a 1-acyl-sn-glycero-3-phosphoethanolamine + (5Z,8Z,11Z,14Z)-eicosatetraenoate + H(+). It catalyses the reaction a 1,2-diacyl-sn-glycero-3-phospho-(1'-sn-glycerol) + H2O = 1-acyl-sn-glycero-3-phospho-(1'-sn-glycerol) + a fatty acid + H(+). The catalysed reaction is 1-hexadecanoyl-2-(9Z-octadecenoyl)-sn-glycero-3-phospho-(1'-sn-glycerol) + H2O = 1-hexadecanoyl-sn-glycero-3-phospho-(1'-sn-glycerol) + (9Z)-octadecenoate + H(+). The enzyme catalyses a 1,2-diacyl-sn-glycero-3-phospho-(1'-sn-glycerol) + H2O = 2-acyl-sn-glycero-3-phospho-(1'-sn-glycerol) + a fatty acid + H(+). It carries out the reaction 1-hexadecanoyl-2-(9Z-octadecenoyl)-sn-glycero-3-phospho-(1'-sn-glycerol) + H2O = 2-(9Z-octadecenoyl)-sn-glycero-3-phospho-(1'-sn-glycerol) + hexadecanoate + H(+). With respect to regulation, transacylase activity is completely inhibited by Triton X-100 and partially inhibited by heparin. Moderately activated by Mg(2+) and Ca(2+). Functionally, has dual calcium-independent phospholipase and O-acyltransferase activities with a potential role in glycerophospholipid homeostasis and remodeling of acyl groups of lipophilic alcohols present in acidic cellular compartments. Catalyzes hydrolysis of the ester bond of the fatty acyl group attached at sn-1 or sn-2 position of phospholipids (phospholipase A1 or A2 activity) and transfer it to the hydroxyl group at the first carbon of lipophilic alcohols (O-acyltransferase activity). Among preferred fatty acyl donors are phosphatidylcholines, phosphatidylethanolamines, phosphatidylglycerols and phosphatidylserines. Favors sn-2 over sn-1 deacylation of unsaturated fatty acyl groups of phosphatidylcholines, phosphatidylethanolamines, and phosphatidylglycerols. Among preferred fatty acyl acceptors are natural lipophilic alcohols including short-chain ceramide N-acetyl-sphingosine (C2 ceramide), alkylacylglycerols, monoacylglycerols, and acylethanolamides such as anandamide and oleoylethanolamide. Selectively hydrolyzes the sn-1 fatty acyl group of truncated oxidized phospholipids and may play a role in detoxification of reactive oxidized phospholipids during oxidative stress. Required for normal phospholipid degradation in alveolar macrophages with potential implications in the clearance of pulmonary surfactant, which is mainly composed of dipalmitoylphosphatidylcholine (1,2-dihexadecanoyl-sn-glycero-3-phosphocholine). Involved in the first step of bis(monoacylglycero)phosphate (BMP) de novo synthesis from phosphatidylglycerol (1,2-diacyl-sn-glycero-3-phospho-(1'-sn-glycerol), PG). BMP is an important player in cargo sorting and degradation, regulation of cellular cholesterol levels and intercellular communication. At neutral pH, hydrolyzes the sn-1 fatty acyl group of the lysophosphatidylcholines. In Bos taurus (Bovine), this protein is Lysosomal phospholipase A and acyltransferase (PLA2G15).